Reading from the N-terminus, the 107-residue chain is Protein Rev (107 aa).

Residues Ser-5 and Ser-8 each carry the phosphoserine; by host CK2 modification. The segment at 18 to 26 (IIKILYQSN) is homomultimerization. 2 disordered regions span residues 26 to 50 (NPYP…ARQR) and 82 to 107 (NINC…VGNP). The Nuclear localization signal and RNA-binding (RRE) motif lies at 34 to 50 (TRQARRNRRRRWRARQR). Positions 36 to 50 (QARRNRRRRWRARQR) are enriched in basic residues. The Nuclear export signal and binding to XPO1 motif lies at 73–84 (FQLPPIERLNIN). Over residues 86-101 (SESGGTSGTQQPQGNT) the composition is skewed to low complexity. A Phosphoserine; by host modification is found at Ser-92.

It belongs to the HIV-1 REV protein family. Homomultimer; when bound to the RRE. Multimeric assembly is essential for activity and may involve XPO1. Binds to human KPNB1, XPO1, TNPO1, RANBP5 and IPO7. Interacts with the viral Integrase. Interacts with human KHDRBS1. Interacts with human NAP1; this interaction decreases Rev multimerization and stimulates its activity. Interacts with human DEAD-box helicases DDX3 and DDX24; these interactions may serve for viral RNA export to the cytoplasm and packaging, respectively. Interacts with human PSIP1; this interaction may inhibit HIV-1 DNA integration by promoting dissociation of the Integrase-LEDGF/p75 complex. Post-translationally, asymmetrically arginine dimethylated at one site by host PRMT6. Methylation impairs the RNA-binding activity and export of viral RNA from the nucleus to the cytoplasm. In terms of processing, phosphorylated by protein kinase CK2. Presence of, and maybe binding to the N-terminus of the regulatory beta subunit of CK2 is necessary for CK2-mediated Rev's phosphorylation.

The protein localises to the host nucleus. Its subcellular location is the host nucleolus. It localises to the host cytoplasm. Its function is as follows. Escorts unspliced or incompletely spliced viral pre-mRNAs (late transcripts) out of the nucleus of infected cells. These pre-mRNAs carry a recognition sequence called Rev responsive element (RRE) located in the env gene, that is not present in fully spliced viral mRNAs (early transcripts). This function is essential since most viral proteins are translated from unspliced or partially spliced pre-mRNAs which cannot exit the nucleus by the pathway used by fully processed cellular mRNAs. Rev itself is translated from a fully spliced mRNA that readily exits the nucleus. Rev's nuclear localization signal (NLS) binds directly to KPNB1/Importin beta-1 without previous binding to KPNA1/Importin alpha-1. KPNB1 binds to the GDP bound form of RAN (Ran-GDP) and targets Rev to the nucleus. In the nucleus, the conversion from Ran-GDP to Ran-GTP dissociates Rev from KPNB1 and allows Rev's binding to the RRE in viral pre-mRNAs. Rev multimerization on the RRE via cooperative assembly exposes its nuclear export signal (NES) to the surface. Rev can then form a complex with XPO1/CRM1 and Ran-GTP, leading to nuclear export of the complex. Conversion from Ran-GTP to Ran-GDP mediates dissociation of the Rev/RRE/XPO1/RAN complex, so that Rev can return to the nucleus for a subsequent round of export. Beside KPNB1, also seems to interact with TNPO1/Transportin-1, RANBP5/IPO5 and IPO7/RANBP7 for nuclear import. The nucleoporin-like HRB/RIP is an essential cofactor that probably indirectly interacts with Rev to release HIV RNAs from the perinuclear region to the cytoplasm. The polypeptide is Protein Rev (Human immunodeficiency virus type 1 group M subtype C (isolate 92BR025) (HIV-1)).